The chain runs to 173 residues: Protein tyrosine phosphatase type IVA 3 (173 aa).

Residues 8–161 form the Tyrosine-protein phosphatase domain; that stretch reads APVEVSYRHM…YRPKQRLRFK (154 aa). C49 and C104 form a disulfide bridge. D72 (proton donor) is an active-site residue. The active-site Phosphocysteine intermediate is C104. Substrate is bound at residue R110. Position 170 is a cysteine methyl ester (C170). A lipid anchor (S-farnesyl cysteine) is attached at C170. Residues 171–173 constitute a propeptide, removed in mature form; that stretch reads CVM.

It belongs to the protein-tyrosine phosphatase family. Interacts with tubulin. Post-translationally, farnesylated. Farnesylation is required for membrane targeting. Unfarnesylated forms are shifted into the nucleus. As to expression, present in the small intestine, where it is located in the differentiated epithelial cells of the villus but not in the proliferating crypt cells (at protein level). Expressed in heart and skeletal muscle, and at lower levels in lung, spleen and testis.

The protein localises to the cell membrane. It localises to the early endosome. The catalysed reaction is O-phospho-L-tyrosyl-[protein] + H2O = L-tyrosyl-[protein] + phosphate. Inhibited by sodium orthovanadate and peroxovanadium compounds, and by pentamidine. In terms of biological role, protein tyrosine phosphatase which stimulates progression from G1 into S phase during mitosis. Enhances cell proliferation, cell motility and invasive activity, and promotes cancer metastasis. May be involved in the progression of cardiac hypertrophy by inhibiting intracellular calcium mobilization in response to angiotensin II. This chain is Protein tyrosine phosphatase type IVA 3 (Ptp4a3), found in Mus musculus (Mouse).